The primary structure comprises 877 residues: Alanine--tRNA ligase (877 aa).

H565, H569, C667, and H671 together coordinate Zn(2+).

The protein belongs to the class-II aminoacyl-tRNA synthetase family. Requires Zn(2+) as cofactor.

The protein localises to the cytoplasm. It carries out the reaction tRNA(Ala) + L-alanine + ATP = L-alanyl-tRNA(Ala) + AMP + diphosphate. Catalyzes the attachment of alanine to tRNA(Ala) in a two-step reaction: alanine is first activated by ATP to form Ala-AMP and then transferred to the acceptor end of tRNA(Ala). Also edits incorrectly charged Ser-tRNA(Ala) and Gly-tRNA(Ala) via its editing domain. The protein is Alanine--tRNA ligase of Acidithiobacillus ferridurans.